The sequence spans 685 residues: Stromal interaction molecule 1 (685 aa).

The N-terminal stretch at 1–22 (MDVCARLALWLLWGLLLHQGQS) is a signal peptide. Over 23–213 (LSHSHSEKNT…LLTRHNHLKD (191 aa)) the chain is Extracellular. Positions 24–43 (SHSHSEKNTGASSGATSEES) are disordered. Positions 32–41 (TGASSGATSE) are enriched in low complexity. 2 EF-hand domains span residues 64 to 97 (SFEA…EDLN) and 102 to 126 (TVKH…AWKA). Residues Asp-76, Asp-78, Asn-80, Asp-82, and Glu-87 each coordinate Ca(2+). 2 N-linked (GlcNAc...) asparagine glycosylation sites follow: Asn-131 and Asn-171. The region spanning 132–200 (WTVDEVIQWL…QLKALDTVLF (69 aa)) is the SAM domain. A helical transmembrane segment spans residues 214–234 (FMLVVSIVIGVGGCWFAYIQN). Residues 235–685 (RYSKEHMKKM…LKIFKKPLKK (451 aa)) lie on the Cytoplasmic side of the membrane. A coiled-coil region spans residues 248-442 (LEGLHRAEQS…IEILCGFQIV (195 aa)). Ser-257 bears the Phosphoserine mark. The tract at residues 344 to 442 (PEALQKWLQL…IEILCGFQIV (99 aa)) is SOAR/CAD. Residues 475-483 (DDVDDMDEE) form a contributes to fast Ca(2+)-dependent inactivation of CRAC channels region. The segment covering 490–499 (MQSPSLQSSV) has biased composition (low complexity). The interval 490 to 542 (MQSPSLQSSVRQRLTEPQHGLGSQRDLTHSDSESSLHTSDRQRVAPKPPQMGR) is disordered. Phosphothreonine is present on Thr-504. Ser-512 carries the phosphoserine modification. Residues 515–532 (DLTHSDSESSLHTSDRQR) are compositionally biased toward basic and acidic residues. The residue at position 517 (Thr-517) is a Phosphothreonine. Residues Ser-519, Ser-521, Ser-523, Ser-524, Ser-567, Ser-575, Ser-602, Ser-608, Ser-618, Ser-621, and Ser-628 each carry the phosphoserine modification. Residues 596 to 685 (LMELNPSVPP…LKIFKKPLKK (90 aa)) are disordered. Residues 608-620 (SPLLDSSHSHSPS) are compositionally biased toward low complexity. Residues 642 to 645 (TRIP) carry the Microtubule tip localization signal motif. Positions 655-666 (EEDNGSIGEETD) are enriched in acidic residues. At Ser-660 the chain carries Phosphoserine. Thr-665 carries the phosphothreonine modification. At Ser-668 the chain carries Phosphoserine. The span at 670 to 685 (GRKKFPLKIFKKPLKK) shows a compositional bias: basic residues. Positions 672 to 685 (KKFPLKIFKKPLKK) are required for generation of inwardly rectifying CRAC currents.

As to quaternary structure, monomer in the presence of Ca(2+). It oligomerizes in absence of Ca(2+). Forms homooligomers and heterooligomers with STIM2. Interacts with pore-forming subunits of CRAC channels, ORAI1, ORAI2 and ORAI3; this interaction is potentiated upon Ca(2+) store depletion. Interacts (via the transmembrane region and the SOAR/CAD domain) with SPPL3; the interaction promotes the binding of STIM1 to ORAI1. Interacts with ORAI1. Interacts with MAPRE1; probably required for targeting to the growing microtubule plus ends. Interacts with CRACR2A/EFCAB4B; the interaction is direct and takes place in absence of Ca(2+). Forms a complex with CRACR2A/EFCAB4B and ORAI1 at low concentration of Ca(2+), the complex dissociates at elevated Ca(2+) concentrations. Interacts with SARAF, promoting a slow inactivation of STIM1-dependent SOCE activity, possibly by facilitating the deoligomerization of STIM1. Interacts with EFHB; the interaction takes place upon Ca(2+)-store depletion and inhibits the association with SARAF. Interacts with ASPH. Interacts with SLC35G1; intracellular Ca(2+)-dependent. May interact with ATP1A1, ATP2A2, ATP2B1, ATP2B4, KPNB1 and XPO1; through SLC35G1. Interacts with TMEM203. Interacts with STIMATE, promoting STIM1 conformational switch. Interacts with TMEM178A. Interacts with CASQ1 (via C-terminal end and preferentially with the monomeric form); this interaction increases in response to a depletion of intracellular Ca(2+), decreases both STIM1 aggregation and clustering, interaction of STIM1 with ORAI1 and store-operated Ca(2+) entry (SOCE) activity. Interacts with ADCY8. In terms of processing, glycosylation is required for cell surface expression. Phosphorylated predominantly on Ser residues.

It is found in the cell membrane. The protein resides in the endoplasmic reticulum membrane. The protein localises to the sarcoplasmic reticulum. Its subcellular location is the cytoplasm. It localises to the cytoskeleton. In terms of biological role, acts as a Ca(2+) sensor that gates two major inward rectifying Ca(2+) channels at the plasma membrane: Ca(2+) release-activated Ca(2+) (CRAC) channels and arachidonate-regulated Ca(2+)-selective (ARC) channels. Plays a role in mediating store-operated Ca(2+) entry (SOCE), a Ca(2+) influx following depletion of intracellular Ca(2+) stores. Upon Ca(2+) depletion, translocates from the endoplasmic reticulum to the plasma membrane where it activates CRAC channel pore-forming subunits ORA1, ORA2 and ORAI3 to generate sustained and oscillatory Ca(2+) entry. Involved in enamel formation. In Rattus norvegicus (Rat), this protein is Stromal interaction molecule 1.